The following is a 72-amino-acid chain: MAKEDCIEMEGVVLEALPNTMFRVELENGRIVTAHISGKMRKNYIRILTGDKVVVEITPYDLTKGRIKFRSK.

In terms of domain architecture, S1-like spans 1–72; it reads MAKEDCIEME…TKGRIKFRSK (72 aa).

The protein belongs to the IF-1 family. As to quaternary structure, component of the 30S ribosomal translation pre-initiation complex which assembles on the 30S ribosome in the order IF-2 and IF-3, IF-1 and N-formylmethionyl-tRNA(fMet); mRNA recruitment can occur at any time during PIC assembly.

It is found in the cytoplasm. One of the essential components for the initiation of protein synthesis. Stabilizes the binding of IF-2 and IF-3 on the 30S subunit to which N-formylmethionyl-tRNA(fMet) subsequently binds. Helps modulate mRNA selection, yielding the 30S pre-initiation complex (PIC). Upon addition of the 50S ribosomal subunit IF-1, IF-2 and IF-3 are released leaving the mature 70S translation initiation complex. This is Translation initiation factor IF-1 from Francisella tularensis subsp. tularensis (strain FSC 198).